A 126-amino-acid chain; its full sequence is Large ribosomal subunit protein bL17 (126 aa).

This sequence belongs to the bacterial ribosomal protein bL17 family. As to quaternary structure, part of the 50S ribosomal subunit. Contacts protein L32.

In Lactococcus lactis subsp. lactis (strain IL1403) (Streptococcus lactis), this protein is Large ribosomal subunit protein bL17.